The chain runs to 183 residues: Seminal plasma protein BSP-30 kDa (183 aa).

A signal peptide spans 1 to 25 (MAPLVGLFLIWAGASVFQQLHPVNG). Positions 23–47 (VNGGDIPDPGSKPTPPGMADELPTE) are disordered. O-linked (GalNAc...) threonine glycosylation is found at Thr36, Thr46, Thr57, Thr58, Thr59, and Thr64. Fibronectin type-II domains lie at 92 to 136 (FEGP…FCTE) and 137 to 183 (RDEP…WKYC). 4 cysteine pairs are disulfide-bonded: Cys97-Cys121, Cys111-Cys134, Cys142-Cys168, and Cys156-Cys183.

It belongs to the seminal plasma protein family.

It localises to the secreted. Functionally, binds to spermatozoa upon ejaculation and may play a role in sperm capacitation. Displays heparin-, gelatin- and phospholipid-binding activities. This Bos taurus (Bovine) protein is Seminal plasma protein BSP-30 kDa.